Here is a 286-residue protein sequence, read N- to C-terminus: Phosphatidylserine decarboxylase proenzyme (286 aa).

Catalysis depends on charge relay system; for autoendoproteolytic cleavage activity residues Asp-90, His-147, and Ser-252. Catalysis depends on Ser-252, which acts as the Schiff-base intermediate with substrate; via pyruvic acid; for decarboxylase activity. Pyruvic acid (Ser); by autocatalysis is present on Ser-252.

Belongs to the phosphatidylserine decarboxylase family. PSD-B subfamily. Prokaryotic type I sub-subfamily. Heterodimer of a large membrane-associated beta subunit and a small pyruvoyl-containing alpha subunit. It depends on pyruvate as a cofactor. Is synthesized initially as an inactive proenzyme. Formation of the active enzyme involves a self-maturation process in which the active site pyruvoyl group is generated from an internal serine residue via an autocatalytic post-translational modification. Two non-identical subunits are generated from the proenzyme in this reaction, and the pyruvate is formed at the N-terminus of the alpha chain, which is derived from the carboxyl end of the proenzyme. The autoendoproteolytic cleavage occurs by a canonical serine protease mechanism, in which the side chain hydroxyl group of the serine supplies its oxygen atom to form the C-terminus of the beta chain, while the remainder of the serine residue undergoes an oxidative deamination to produce ammonia and the pyruvoyl prosthetic group on the alpha chain. During this reaction, the Ser that is part of the protease active site of the proenzyme becomes the pyruvoyl prosthetic group, which constitutes an essential element of the active site of the mature decarboxylase.

The protein localises to the cell membrane. The catalysed reaction is a 1,2-diacyl-sn-glycero-3-phospho-L-serine + H(+) = a 1,2-diacyl-sn-glycero-3-phosphoethanolamine + CO2. Its pathway is phospholipid metabolism; phosphatidylethanolamine biosynthesis; phosphatidylethanolamine from CDP-diacylglycerol: step 2/2. Catalyzes the formation of phosphatidylethanolamine (PtdEtn) from phosphatidylserine (PtdSer). The sequence is that of Phosphatidylserine decarboxylase proenzyme from Ectopseudomonas mendocina (strain ymp) (Pseudomonas mendocina).